The primary structure comprises 545 residues: Protein disulfide isomerase-like 1-3 (545 aa).

A compositionally biased stretch (pro residues) spans 1 to 16; it reads MWPRAPATPPPPPWPS. The disordered stretch occupies residues 1–24; the sequence is MWPRAPATPPPPPWPSKPSAASRS. The Thioredoxin 1 domain maps to 55-189; it reads ASSTAFAAAF…IVAYLKRQAG (135 aa). Asn87 carries an N-linked (GlcNAc...) asparagine glycan. Residues Cys107 and Cys110 each act as nucleophile in the active site. A disulfide bridge connects residues Cys107 and Cys110. Asn349 carries an N-linked (GlcNAc...) asparagine glycan. Residues 403-545 enclose the Thioredoxin 2 domain; the sequence is FTEGTLAPHV…TTTESVKDEL (143 aa). Catalysis depends on nucleophile residues Cys453 and Cys456. Residues Cys453 and Cys456 are joined by a disulfide bond. The Prevents secretion from ER motif lies at 542–545; that stretch reads KDEL.

Belongs to the protein disulfide isomerase family.

Its subcellular location is the endoplasmic reticulum lumen. It carries out the reaction Catalyzes the rearrangement of -S-S- bonds in proteins.. Acts as a protein-folding catalyst that interacts with nascent polypeptides to catalyze the formation, isomerization, and reduction or oxidation of disulfide bonds. May play a role in storage protein biogenesis. The polypeptide is Protein disulfide isomerase-like 1-3 (PDIL1-3) (Oryza sativa subsp. japonica (Rice)).